Here is a 1767-residue protein sequence, read N- to C-terminus: Endo-alpha-N-acetylgalactosaminidase (1767 aa).

The first 39 residues, 1-39 (MNKGLFEKRCKYSIRKFSLGVASVMIGAAFFGTSPVLAD), serve as a signal peptide directing secretion. 2 stretches are compositionally biased toward basic and acidic residues: residues 61 to 75 (KEND…KVGE) and 84 to 111 (DGPK…DKPA). 2 disordered regions span residues 61-124 (KEND…VTPE) and 301-324 (VKTD…GPEV). The segment covering 112–124 (AAKPETPKTVTPE) has biased composition (low complexity). Basic and acidic residues predominate over residues 304 to 324 (DNQEGVKTEDTPAEKETGPEV). Residues D577, N579, D581, N583, and D588 each contribute to the Ca(2+) site. A catalytic region spans residues 602–893 (GWEKVKDITA…DVMTKYFQHF (292 aa)). Position 658 (D658) interacts with substrate. Residue D764 is the Nucleophile of the active site. The Proton donor/acceptor role is filled by E796. Residues D1233, E1235, E1281, W1284, and D1411 each contribute to the Ca(2+) site. Positions 1711–1730 (LASEQGKTPDYKQEIARPET) are disordered. The span at 1717-1730 (KTPDYKQEIARPET) shows a compositional bias: basic and acidic residues. The short motif at 1735–1739 (LPATG) is the LPXTG sorting signal element. T1738 carries the pentaglycyl murein peptidoglycan amidated threonine modification. Residues 1739-1767 (GESQSDTALILASVSLALSALFVVKTKKD) constitute a propeptide, removed by sortase.

The protein belongs to the glycosyl hydrolase 101 family. A subfamily.

The protein resides in the secreted. It localises to the cell wall. The enzyme catalyses a 3-O-[beta-D-galactosyl-(1-&gt;3)-N-acetyl-alpha-D-galactosaminyl]-L-threonyl-[protein] + H2O = beta-D-galactosyl-(1-&gt;3)-N-acetyl-D-galactosamine + L-threonyl-[protein]. It catalyses the reaction a 3-O-[beta-D-galactosyl-(1-&gt;3)-N-acetyl-alpha-D-galactosaminyl]-L-seryl-[protein] + H2O = beta-D-galactosyl-(1-&gt;3)-N-acetyl-D-galactosamine + L-seryl-[protein]. In terms of biological role, involved in the breakdown of mucin-type O-linked glycans. Specifically removes the T-antigen disaccharide (Gal-beta-1,3-GalNAc-alpha) from extracellular host glycoproteins. Representative of a broadly important class of virulence factors. This is Endo-alpha-N-acetylgalactosaminidase from Streptococcus pneumoniae serotype 4 (strain ATCC BAA-334 / TIGR4).